A 214-amino-acid chain; its full sequence is Variable small protein 1 (214 aa).

The N-terminal stretch at 1–18 (MRKRISAIIMTLFMVFMS) is a signal peptide. The N-palmitoyl cysteine moiety is linked to residue C19. C19 carries S-diacylglycerol cysteine lipidation.

This sequence belongs to the variable small protein (Vsp) family.

It localises to the cell outer membrane. Its function is as follows. The Vlp and Vsp proteins are antigenically distinct proteins, only one vlp or vsp gene is transcriptionally active at any one time. Switching between these genes is a mechanism of host immune response evasion. The protein is Variable small protein 1 of Borrelia hermsii.